Reading from the N-terminus, the 102-residue chain is Putative septation protein SpoVG 1 (102 aa).

The protein belongs to the SpoVG family.

Its function is as follows. Could be involved in septation. The polypeptide is Putative septation protein SpoVG 1 (Listeria innocua serovar 6a (strain ATCC BAA-680 / CLIP 11262)).